The following is a 434-amino-acid chain: Tubulin gamma chain (434 aa).

GTP is bound at residue 135-141 (AGGTGSG).

Belongs to the tubulin family.

It is found in the cytoplasm. The protein resides in the cytoskeleton. Its subcellular location is the microtubule organizing center. The protein localises to the spindle pole body. In terms of biological role, tubulin is the major constituent of microtubules. The gamma chain is found at microtubule organizing centers (MTOC) such as the spindle poles or the centrosome, suggesting that it is involved in the minus-end nucleation of microtubule assembly. The polypeptide is Tubulin gamma chain (TUB4) (Encephalitozoon cuniculi (strain GB-M1) (Microsporidian parasite)).